A 66-amino-acid polypeptide reads, in one-letter code: UPF0337 protein BT9727_0908 (66 aa).

The segment at 1–22 (MSENGLKEQITGKVEKTKGQVK) is disordered. Basic and acidic residues predominate over residues 13 to 22 (KVEKTKGQVK).

Belongs to the UPF0337 (CsbD) family.

The protein is UPF0337 protein BT9727_0908 of Bacillus thuringiensis subsp. konkukian (strain 97-27).